The chain runs to 512 residues: Protein male-specific lethal-3 (512 aa).

In terms of domain architecture, Chromo spans 11 to 90 (FHKGEIVLCY…QLQRELAEAA (80 aa)). The segment at 98-175 (YSYKGTPDKP…DGRLKGNRGR (78 aa)) is disordered. Basic and acidic residues predominate over residues 149–169 (RTRDNSGGKRKEKPPSGDGRL). The region spanning 196 to 500 (QEDRIMMRVS…STALPQEDLQ (305 aa)) is the MRG domain.

In terms of assembly, component of the male-specific lethal (MSL) histone acetyltransferase complex, composed of mof, mle, msl-1, msl-2 and msl-3 proteins, as well as roX1 and roX2 non-coding RNAs. Component of a maternal MSL subcomplex composed of mof, msl-1 and msl-3. Post-translationally, ubiquitinated by msl-2.

The protein localises to the nucleus. Its subcellular location is the chromosome. Component of the male-specific lethal (MSL) histone acetyltransferase complex, a multiprotein complex essential for elevating transcription of the single X chromosome in the male (X chromosome dosage compensation). The MSL complex specifically associates with the single X chromosome in males and mediates formation of H4K16ac, promoting a two-fold activation of X chromosome. Acts as a histone reader that specifically recognizes and binds histone H3 trimethylated at 'Lys-36' (H3K36me3) and histone H4 monomethylated at 'Lys-20' (H4K20me1). Within the MSL complex, mediates the spreading of the MSL complex from initiation sites on the male X chromosome to flanking chromatin. Following initial recruitment of the MSL complex to male X chromosome by msl-2, msl-3 binds H3K36me3 and promotes spreading of the MSL complex in cis. In addition to its role in dosage compensation in males, promotes germline stem cell differentiation in females: recognizes and binds H3K36me3, promoting recruitment of the ATAC complex and transcription of genes, such as RpS19b. This Drosophila melanogaster (Fruit fly) protein is Protein male-specific lethal-3.